Here is a 328-residue protein sequence, read N- to C-terminus: Renalase (328 aa).

Residues A13, 32-33, R40, and 56-57 each bind FAD; these read DK and QY. Substrate is bound by residues 57-61 and 96-98; these read YFTAR and SPD. Residue I128 coordinates FAD. Position 185 (T185) interacts with substrate. D302 is an FAD binding site. Residue R308 participates in substrate binding. An FAD-binding site is contributed by V309.

Belongs to the bacterial renalase family. Requires FAD as cofactor.

The enzyme catalyses 1,2-dihydro-beta-NAD + O2 + H(+) = H2O2 + NAD(+). It catalyses the reaction 1,2-dihydro-beta-NADP + O2 + H(+) = H2O2 + NADP(+). The catalysed reaction is 1,6-dihydro-beta-NADP + O2 + H(+) = H2O2 + NADP(+). It carries out the reaction 1,6-dihydro-beta-NAD + O2 + H(+) = H2O2 + NAD(+). Functionally, catalyzes the oxidation of the 1,2-dihydro- and 1,6-dihydro- isomeric forms of beta-NAD(P) back to beta-NAD(P)+. Has a preference for 1,2-dihydro-beta-NAD as substrate. May serve to protect primary metabolism dehydrogenases from inhibition by the 1,2-dihydro- and 1,6-dihydro-beta-NAD(P) isomers. The protein is Renalase of Pseudomonas syringae pv. tomato (strain ATCC BAA-871 / DC3000).